A 410-amino-acid polypeptide reads, in one-letter code: Putative nickel insertion protein (410 aa).

Belongs to the LarC family.

The protein is Putative nickel insertion protein of Cyanothece sp. (strain PCC 7425 / ATCC 29141).